The primary structure comprises 145 residues: Arginine repressor (145 aa).

It belongs to the ArgR family.

It localises to the cytoplasm. It participates in amino-acid biosynthesis; L-arginine biosynthesis [regulation]. Regulates arginine biosynthesis genes. The polypeptide is Arginine repressor (Streptococcus pyogenes serotype M6 (strain ATCC BAA-946 / MGAS10394)).